Reading from the N-terminus, the 907-residue chain is Probable dipeptidyl-aminopeptidase B (907 aa).

Basic and acidic residues predominate over residues 1–26 (MPRQRAPKEEEAELLTKQERSTRSSE). The interval 1 to 70 (MPRQRAPKEE…EKYTDEDDEA (70 aa)) is disordered. Over 1–93 (MPRQRAPKEE…PVAVDKKTRR (93 aa)) the chain is Cytoplasmic. Low complexity predominate over residues 30–44 (DASVSSISTTSLVLE). The chain crosses the membrane as a helical; Signal-anchor for type II membrane protein span at residues 94-114 (WLWIVGIACVTGWALALVFFL). Topologically, residues 115-907 (MSGSYKHVST…SQVDARLERR (793 aa)) are vacuolar. The N-linked (GlcNAc...) asparagine glycan is linked to N560. The active-site Charge relay system is S751. A glycan (N-linked (GlcNAc...) asparagine) is linked at N805. Active-site charge relay system residues include D828 and H861.

This sequence belongs to the peptidase S9B family.

The protein localises to the vacuole membrane. It catalyses the reaction Release of an N-terminal dipeptide, Xaa-Yaa-|-Zaa-, from a polypeptide, preferentially when Yaa is Pro, provided Zaa is neither Pro nor hydroxyproline.. Functionally, type IV dipeptidyl-peptidase which removes N-terminal dipeptides sequentially from polypeptides having unsubstituted N-termini provided that the penultimate residue is proline. This chain is Probable dipeptidyl-aminopeptidase B (dapB), found in Pyrenophora teres f. teres (strain 0-1) (Barley net blotch fungus).